Consider the following 61-residue polypeptide: Short neurotoxin 2 (61 aa).

4 cysteine pairs are disulfide-bonded: cysteine 3–cysteine 23, cysteine 17–cysteine 40, cysteine 42–cysteine 53, and cysteine 54–cysteine 59.

The protein belongs to the three-finger toxin family. Short-chain subfamily. Type I alpha-neurotoxin sub-subfamily. Expressed by the venom gland.

The protein localises to the secreted. Functionally, binds to muscle nicotinic acetylcholine receptor (nAChR) and inhibit acetylcholine from binding to the receptor, thereby impairing neuromuscular transmission. The polypeptide is Short neurotoxin 2 (Naja nivea (Cape cobra)).